We begin with the raw amino-acid sequence, 419 residues long: MEKPLPNPPIQESLRKQSPQDAVYDDLVFGLKRYEAAFSIKDSIEDVLANFSKDEEKEMVCLSTSIAENPYQSLSLESVPSKILFGSFLFYVKDRIPEKAGYIIEEQFCKRLQQIDYDAYSFSPKECNEKLKNIFSEFSQMKLKMLSVFFSIVQILLPKLSGDYQEHVQFFASISAVVAPRGYVFEIYHAVEHLSLEAREVFQLHHPPSPKQTRRVVSEGPLNGVNYKQNTTNNRVSSFQNSQYSTLNNFQNNSNQSPNSNDLQPLQAEAFHSAHNGYSSSTLNLNSELNVMKDHDLQAPIPRALKQHKLPPIPVPEVQTTNIGYQTDLPLQNPNDNLVSLAIYEALYEKFLKACKDLEEVSKSYEESREEIEALHETFTEEVTSFQSTKRLKEEKIIQEKSRVDKMIDEYRQKLSEST.

This is an uncharacterized protein from Schizosaccharomyces pombe (strain 972 / ATCC 24843) (Fission yeast).